The chain runs to 286 residues: MNLKRKWDVYSRLTRIDRPIGTLLLLWPCLMALMLAAGGMPDLKVLVIFIIGVVIMRACGCIINDYADRDLDSFVERTRSRPLASGEISTKEALILFVILGLSAFGLVLLLNGLVVKLSVVGIILTIIYPFTKRITNMPQMFLGIVWSWSIPMAYAAQTGEVPMEAWWLFAANWCWTVAYDTMYAMVDRDDDLKVGIKSTAILFGKYDRQIIGLFQLAALACFIAAGWSADRGLLYGLGILTFVGFSTYQQMLIFDRERAPCFKAFLNNNWAGLALFVGLGADYLI.

7 helical membrane-spanning segments follow: residues 21 to 40 (GTLLLLWPCLMALMLAAGGM), 95 to 115 (ILFVILGLSAFGLVLLLNGLV), 142 to 162 (FLGIVWSWSIPMAYAAQTGEV), 167 to 187 (WWLFAANWCWTVAYDTMYAMV), 210 to 230 (QIIGLFQLAALACFIAAGWSA), 235 to 255 (LYGLGILTFVGFSTYQQMLIF), and 266 to 286 (FLNNNWAGLALFVGLGADYLI).

The protein belongs to the UbiA prenyltransferase family. Requires Mg(2+) as cofactor.

It localises to the cell inner membrane. The catalysed reaction is all-trans-octaprenyl diphosphate + 4-hydroxybenzoate = 4-hydroxy-3-(all-trans-octaprenyl)benzoate + diphosphate. It functions in the pathway cofactor biosynthesis; ubiquinone biosynthesis. Catalyzes the prenylation of para-hydroxybenzoate (PHB) with an all-trans polyprenyl group. Mediates the second step in the final reaction sequence of ubiquinone-8 (UQ-8) biosynthesis, which is the condensation of the polyisoprenoid side chain with PHB, generating the first membrane-bound Q intermediate 3-octaprenyl-4-hydroxybenzoate. In Shewanella baltica (strain OS155 / ATCC BAA-1091), this protein is 4-hydroxybenzoate octaprenyltransferase.